The following is a 458-amino-acid chain: Siroheme synthase (458 aa).

The precorrin-2 dehydrogenase /sirohydrochlorin ferrochelatase stretch occupies residues 1–203 (MDYLPLFFDL…GNLAAAEQLI (203 aa)). NAD(+) is bound by residues 22-23 (TI) and 43-44 (PK). Ser128 bears the Phosphoserine mark. Residues 216–458 (GEVYLVGAGP…RCHEKLNWYK (243 aa)) are uroporphyrinogen-III C-methyltransferase. Pro225 serves as a coordination point for S-adenosyl-L-methionine. Residue Asp248 is the Proton acceptor of the active site. Lys270 acts as the Proton donor in catalysis. S-adenosyl-L-methionine is bound by residues 301–303 (GGD), Ile306, 331–332 (TA), Met383, and Gly412.

It in the N-terminal section; belongs to the precorrin-2 dehydrogenase / sirohydrochlorin ferrochelatase family. The protein in the C-terminal section; belongs to the precorrin methyltransferase family.

It carries out the reaction uroporphyrinogen III + 2 S-adenosyl-L-methionine = precorrin-2 + 2 S-adenosyl-L-homocysteine + H(+). The enzyme catalyses precorrin-2 + NAD(+) = sirohydrochlorin + NADH + 2 H(+). The catalysed reaction is siroheme + 2 H(+) = sirohydrochlorin + Fe(2+). It functions in the pathway cofactor biosynthesis; adenosylcobalamin biosynthesis; precorrin-2 from uroporphyrinogen III: step 1/1. Its pathway is cofactor biosynthesis; adenosylcobalamin biosynthesis; sirohydrochlorin from precorrin-2: step 1/1. It participates in porphyrin-containing compound metabolism; siroheme biosynthesis; precorrin-2 from uroporphyrinogen III: step 1/1. The protein operates within porphyrin-containing compound metabolism; siroheme biosynthesis; siroheme from sirohydrochlorin: step 1/1. It functions in the pathway porphyrin-containing compound metabolism; siroheme biosynthesis; sirohydrochlorin from precorrin-2: step 1/1. Its function is as follows. Multifunctional enzyme that catalyzes the SAM-dependent methylations of uroporphyrinogen III at position C-2 and C-7 to form precorrin-2 via precorrin-1. Then it catalyzes the NAD-dependent ring dehydrogenation of precorrin-2 to yield sirohydrochlorin. Finally, it catalyzes the ferrochelation of sirohydrochlorin to yield siroheme. This chain is Siroheme synthase, found in Saccharophagus degradans (strain 2-40 / ATCC 43961 / DSM 17024).